Here is a 339-residue protein sequence, read N- to C-terminus: UDP-3-O-acylglucosamine N-acyltransferase (339 aa).

Histidine 251 functions as the Proton acceptor in the catalytic mechanism.

This sequence belongs to the transferase hexapeptide repeat family. LpxD subfamily. Homotrimer.

It carries out the reaction a UDP-3-O-[(3R)-3-hydroxyacyl]-alpha-D-glucosamine + a (3R)-hydroxyacyl-[ACP] = a UDP-2-N,3-O-bis[(3R)-3-hydroxyacyl]-alpha-D-glucosamine + holo-[ACP] + H(+). The protein operates within bacterial outer membrane biogenesis; LPS lipid A biosynthesis. Catalyzes the N-acylation of UDP-3-O-acylglucosamine using 3-hydroxyacyl-ACP as the acyl donor. Is involved in the biosynthesis of lipid A, a phosphorylated glycolipid that anchors the lipopolysaccharide to the outer membrane of the cell. This Paramagnetospirillum magneticum (strain ATCC 700264 / AMB-1) (Magnetospirillum magneticum) protein is UDP-3-O-acylglucosamine N-acyltransferase.